A 229-amino-acid chain; its full sequence is Large ribosomal subunit protein uL1 (229 aa).

Belongs to the universal ribosomal protein uL1 family. Part of the 50S ribosomal subunit.

Functionally, binds directly to 23S rRNA. The L1 stalk is quite mobile in the ribosome, and is involved in E site tRNA release. Protein L1 is also a translational repressor protein, it controls the translation of the L11 operon by binding to its mRNA. The protein is Large ribosomal subunit protein uL1 of Actinobacillus pleuropneumoniae serotype 3 (strain JL03).